The following is a 448-amino-acid chain: Protein Z-dependent protease inhibitor (448 aa).

Positions 1 to 21 are cleaved as a signal peptide; it reads MRVASSLFLPVLLTEVWLVTS. Positions 33-70 are disordered; the sequence is VHLESQDYENQTWEEYTRTDPREEEEEEEEKEEGKDEE. Residues 54–63 show a composition bias toward acidic residues; that stretch reads REEEEEEEEK. A glycan (N-linked (GlcNAc...) asparagine) is linked at Asn-81. Residues 140–157 are heparin-binding; it reads AGPLILPALFKKVKETFS. Asn-184, Asn-278, and Asn-299 each carry an N-linked (GlcNAc...) asparagine glycan.

This sequence belongs to the serpin family. Post-translationally, phosphorylated by FAM20C in the extracellular medium. Detectable in liver, but not in heart, brain, spleen, lung, kidney, skeletal muscle or testes.

The protein resides in the secreted. Functionally, inhibits activity of the coagulation protease factor Xa in the presence of PROZ, calcium and phospholipids. Also inhibits factor XIa in the absence of cofactors. This chain is Protein Z-dependent protease inhibitor (Serpina10), found in Mus musculus (Mouse).